A 431-amino-acid polypeptide reads, in one-letter code: Bone morphogenetic protein 7 (431 aa).

The signal sequence occupies residues M1 to A29. Positions D30–R292 are excised as a propeptide. N-linked (GlcNAc...) asparagine glycosylation is found at N187, N302, N321, and N372. A disordered region spans residues I291 to E311. 3 disulfides stabilise this stretch: C330–C396, C359–C428, and C363–C430.

Belongs to the TGF-beta family. Homodimer; disulfide-linked. Interacts with SOSTDC1. Interacts with TWSG1. Interacts with FBN1 (via N-terminal domain) and FBN2. Interacts with type I receptor ACVR1. Interacts with type II receptor ACVR2A. Interacts with NOG; this interaction inhibits canonical BMP signaling. Interacts with SCUBE3. Interacts with ERFE; the interaction inhibits BMP-induced transcription of HAMP. Interacts with TGFBR3. Several N-termini starting at positions 293, 300, 315 and 316 have been identified by direct sequencing resulting in secretion of different mature forms. As to expression, expressed in the kidney and bladder. Lower levels seen in the brain.

The protein localises to the secreted. Functionally, growth factor of the TGF-beta superfamily that plays important role in various biological processes, including embryogenesis, hematopoiesis, neurogenesis and skeletal morphogenesis. Initiates the canonical BMP signaling cascade by associating with type I receptor ACVR1 and type II receptor ACVR2A. Once all three components are bound together in a complex at the cell surface, ACVR2A phosphorylates and activates ACVR1. In turn, ACVR1 propagates signal by phosphorylating SMAD1/5/8 that travel to the nucleus and act as activators and repressors of transcription of target genes. For specific functions such as growth cone collapse in developing spinal neurons and chemotaxis of monocytes, also uses BMPR2 as type II receptor. Can also signal through non-canonical pathways such as P38 MAP kinase signaling cascade that promotes brown adipocyte differentiation through activation of target genes, including members of the SOX family of transcription factors. Promotes the expression of HAMP, this is repressed by its interaction with ERFE. This Homo sapiens (Human) protein is Bone morphogenetic protein 7 (BMP7).